A 510-amino-acid chain; its full sequence is NAD(P)H-quinone oxidoreductase subunit 2 A, chloroplastic (510 aa).

14 helical membrane passes run 31-51, 57-77, 99-119, 124-144, 149-169, 184-204, 229-249, 261-281, 295-315, 323-343, 354-374, 395-415, 418-438, and 484-504; these read LIFPECILIFGLILLLMIDLT, IPWLYFISSTSLVMSITALLF, IFQFLILLCSTLCIPLSVEYI, MAITEFLLFVLTATLGGMFLC, LITIFVALECFSLCSYLLSGY, LLMGGASSSILVYGFSWLYGL, ISIALIFITVGIGFKLSLAPF, PTPVVAFLSVTSKVAALALAT, WHLLLEILAILSMILGNLIAI, MLAYSSIGQIGYVIIGIIVGD, YMLFYISMNLGTFACIVLFGL, ALSLALCLLSLGGLPPLAGFF, LYLFWCGWQAGLYFLVLIGLL, and MIVCVIASTILGISMNPIIAI.

It belongs to the complex I subunit 2 family. As to quaternary structure, NDH is composed of at least 16 different subunits, 5 of which are encoded in the nucleus.

The protein localises to the plastid. It localises to the chloroplast thylakoid membrane. The enzyme catalyses a plastoquinone + NADH + (n+1) H(+)(in) = a plastoquinol + NAD(+) + n H(+)(out). The catalysed reaction is a plastoquinone + NADPH + (n+1) H(+)(in) = a plastoquinol + NADP(+) + n H(+)(out). In terms of biological role, NDH shuttles electrons from NAD(P)H:plastoquinone, via FMN and iron-sulfur (Fe-S) centers, to quinones in the photosynthetic chain and possibly in a chloroplast respiratory chain. The immediate electron acceptor for the enzyme in this species is believed to be plastoquinone. Couples the redox reaction to proton translocation, and thus conserves the redox energy in a proton gradient. This is NAD(P)H-quinone oxidoreductase subunit 2 A, chloroplastic from Nicotiana tabacum (Common tobacco).